Here is a 117-residue protein sequence, read N- to C-terminus: MSWRGRSTYYWPRPRPYVQPPEMIGPMRPEQFSDEVEPATPEEGEPATQRQDPAAAQEGEDEGASAGQGPKPEADSQEQGHPQTGCECEDGPDGQEMDPPNPEEVKTPEEGEKQSQC.

A disordered region spans residues Met-1–Cys-117. 2 stretches are compositionally biased toward acidic residues: residues Phe-32–Glu-45 and Glu-87–Glu-96. Over residues Glu-103–Cys-117 the composition is skewed to basic and acidic residues.

This sequence belongs to the GAGE family.

This chain is G antigen 12J (GAGE12J), found in Homo sapiens (Human).